A 313-amino-acid chain; its full sequence is Beta-ketoacyl-[acyl-carrier-protein] synthase III (313 aa).

Active-site residues include cysteine 112 and histidine 238. The tract at residues 239–243 (QANIR) is ACP-binding. The active site involves asparagine 268.

Belongs to the thiolase-like superfamily. FabH family. In terms of assembly, homodimer.

It is found in the cytoplasm. The catalysed reaction is malonyl-[ACP] + acetyl-CoA + H(+) = 3-oxobutanoyl-[ACP] + CO2 + CoA. It functions in the pathway lipid metabolism; fatty acid biosynthesis. Functionally, catalyzes the condensation reaction of fatty acid synthesis by the addition to an acyl acceptor of two carbons from malonyl-ACP. Catalyzes the first condensation reaction which initiates fatty acid synthesis and may therefore play a role in governing the total rate of fatty acid production. Possesses both acetoacetyl-ACP synthase and acetyl transacylase activities. Its substrate specificity determines the biosynthesis of branched-chain and/or straight-chain of fatty acids. The chain is Beta-ketoacyl-[acyl-carrier-protein] synthase III from Staphylococcus aureus (strain bovine RF122 / ET3-1).